The primary structure comprises 811 residues: DEP domain-containing protein 1A (811 aa).

The DEP domain occupies 24-108 (FRAGMPLRKH…DNNQLFRFPA (85 aa)). Positions 281–321 (DYFLDLPEPLLTFEYYELFVNILVVCGYITVSDRSSGIHKI) constitute a Rho-GAP domain. Residue serine 512 is modified to Phosphoserine. An interaction with ZNF224 region spans residues 598-653 (AIDALQLCCLLLPPPNRRKLQLLMRMISRMSQNVDMPKLHDAMGTRSLMIHTFSRC).

In terms of assembly, isoform 2 and isoform 5 can form homodimers and heterodimers. Interacts with ZNF224. In terms of tissue distribution, expressed in testis. Up-regulated in bladder cancer cells (at protein level).

The protein localises to the nucleus. Functionally, may be involved in transcriptional regulation as a transcriptional corepressor. The DEPDC1A-ZNF224 complex may play a critical role in bladder carcinogenesis by repressing the transcription of the A20 gene, leading to transport of NF-KB protein into the nucleus, resulting in suppression of apoptosis of bladder cancer cells. The protein is DEP domain-containing protein 1A (DEPDC1) of Homo sapiens (Human).